The sequence spans 68 residues: U-reduvitoxin-Pr3a (68 aa).

An N-terminal signal peptide occupies residues 1 to 22 (MKAGMKLVLVLVIASIALLALA). Disulfide bonds link Cys-29–Cys-47, Cys-36–Cys-52, and Cys-46–Cys-59.

It belongs to the venom Ptu1-like knottin family. As to expression, expressed by the venom gland.

The protein localises to the secreted. In terms of biological role, binds reversibly and blocks P/Q-type voltage-gated calcium channels (Cav). The chain is U-reduvitoxin-Pr3a from Platymeris rhadamanthus (Red spot assassin bug).